A 284-amino-acid chain; its full sequence is Bifunctional protein FolD 2 (284 aa).

NADP(+) is bound by residues 166–168 (GAS) and I232.

Belongs to the tetrahydrofolate dehydrogenase/cyclohydrolase family. Homodimer.

The catalysed reaction is (6R)-5,10-methylene-5,6,7,8-tetrahydrofolate + NADP(+) = (6R)-5,10-methenyltetrahydrofolate + NADPH. It catalyses the reaction (6R)-5,10-methenyltetrahydrofolate + H2O = (6R)-10-formyltetrahydrofolate + H(+). The protein operates within one-carbon metabolism; tetrahydrofolate interconversion. Catalyzes the oxidation of 5,10-methylenetetrahydrofolate to 5,10-methenyltetrahydrofolate and then the hydrolysis of 5,10-methenyltetrahydrofolate to 10-formyltetrahydrofolate. In Pseudomonas putida (strain ATCC 47054 / DSM 6125 / CFBP 8728 / NCIMB 11950 / KT2440), this protein is Bifunctional protein FolD 2.